The following is an 87-amino-acid chain: DNA/RNA-binding protein Alba (87 aa).

The residue at position 9 (lysine 9) is an N6-acetyllysine.

The protein belongs to the histone-like Alba family. Acetylated. Acetylation at Lys-9 decreases DNA-binding affinity.

It is found in the cytoplasm. The protein localises to the chromosome. Functionally, binds double-stranded DNA tightly but without sequence specificity. Involved in DNA compaction. This Methanocaldococcus jannaschii (strain ATCC 43067 / DSM 2661 / JAL-1 / JCM 10045 / NBRC 100440) (Methanococcus jannaschii) protein is DNA/RNA-binding protein Alba.